Consider the following 470-residue polypeptide: Methylenetetrahydrofolate--tRNA-(uracil-5-)-methyltransferase TrmFO (470 aa).

10–15 (GAGLAG) is a binding site for FAD.

This sequence belongs to the MnmG family. TrmFO subfamily. Requires FAD as cofactor.

Its subcellular location is the cytoplasm. The catalysed reaction is uridine(54) in tRNA + (6R)-5,10-methylene-5,6,7,8-tetrahydrofolate + NADH + H(+) = 5-methyluridine(54) in tRNA + (6S)-5,6,7,8-tetrahydrofolate + NAD(+). It carries out the reaction uridine(54) in tRNA + (6R)-5,10-methylene-5,6,7,8-tetrahydrofolate + NADPH + H(+) = 5-methyluridine(54) in tRNA + (6S)-5,6,7,8-tetrahydrofolate + NADP(+). In terms of biological role, catalyzes the folate-dependent formation of 5-methyl-uridine at position 54 (M-5-U54) in all tRNAs. This Prochlorococcus marinus (strain MIT 9215) protein is Methylenetetrahydrofolate--tRNA-(uracil-5-)-methyltransferase TrmFO.